A 445-amino-acid polypeptide reads, in one-letter code: MTTILKSLPKGENVGIAFSGGLDTSAALLWMKQKGARVFAYTANLGQPDEADYDEIPRKAMEFGAEKARLVDCRSQLVHEGIAAIQSGAFHVSTGGIAYFNTTPLGRAVTGTMLVSAMKEDGVNIWGDGSTYKGNDIERFYRYGLLTNPELRIYKPWLDQQFIDELGGRAEMSAFMTAHGFAYKMSAEKAYSTDSNLLGATHEAKDLEHLDSGIKIVNPIMGVPFWRDDCAVKAETVTVRFEEGQPVALNGQSFADPVALFLEANAIGGRHGLGMSDQIENRIIEAKSRGIYEAPGMALLHIAYERLVTGIHNEDTIEQYRISGMRLGRLLYQGRWFDSQALMLRETAQRWVARAITGEVTLELRRGNDYSIMNTESPNLTYAPERLSMEKVEDAPFTPGDRIGQLTMRNLDIADTRAKLDIFAKAGLLSAGEGSHIPKLENDKG.

Residues 17 to 25 and alanine 43 contribute to the ATP site; that span reads AFSGGLDTS. Tyrosine 99 serves as a coordination point for L-citrulline. 2 residues coordinate ATP: glycine 129 and threonine 131. L-aspartate contacts are provided by threonine 131, asparagine 135, and aspartate 136. Residue asparagine 135 participates in L-citrulline binding. Residue aspartate 136 participates in ATP binding. Residues arginine 139 and serine 192 each contribute to the L-citrulline site. Aspartate 194 lines the ATP pocket. 3 residues coordinate L-citrulline: threonine 201, glutamate 203, and glutamate 280.

This sequence belongs to the argininosuccinate synthase family. Type 2 subfamily. Homotetramer.

It localises to the cytoplasm. The catalysed reaction is L-citrulline + L-aspartate + ATP = 2-(N(omega)-L-arginino)succinate + AMP + diphosphate + H(+). It participates in amino-acid biosynthesis; L-arginine biosynthesis; L-arginine from L-ornithine and carbamoyl phosphate: step 2/3. The polypeptide is Argininosuccinate synthase (Rhodopseudomonas palustris (strain BisB5)).